The following is a 498-amino-acid chain: Phosphonates import ATP-binding protein PhnC (498 aa).

The interval 1 to 27 is disordered; sequence MPQRPEAARAGPVAGPDAASKPAPGPA. The region spanning 28 to 269 is the ABC transporter domain; that stretch reads LTLRGAGRAY…DLGELYEARR (242 aa). An ATP-binding site is contributed by 60 to 67; sequence GPSGAGKS. Positions 270 to 498 are lysR substrate binding domain; the sequence is GAADPARAPA…LEVARAEVPP (229 aa).

It belongs to the ABC transporter superfamily. Phosphonates importer (TC 3.A.1.9.1) family. The complex is composed of two ATP-binding proteins (PhnC), two transmembrane proteins (PhnE) and a solute-binding protein (PhnD).

It localises to the cell inner membrane. The enzyme catalyses phosphonate(out) + ATP + H2O = phosphonate(in) + ADP + phosphate + H(+). In terms of biological role, part of the ABC transporter complex PhnCDE involved in phosphonates import. Responsible for energy coupling to the transport system. The chain is Phosphonates import ATP-binding protein PhnC from Anaeromyxobacter dehalogenans (strain 2CP-C).